A 119-amino-acid polypeptide reads, in one-letter code: Large ribosomal subunit protein uL18 (119 aa).

Residues 1 to 20 (MISKPDKNKTRQKRHTRVRG) are disordered. Positions 10 to 20 (TRQKRHTRVRG) are enriched in basic residues.

It belongs to the universal ribosomal protein uL18 family. As to quaternary structure, part of the 50S ribosomal subunit; part of the 5S rRNA/L5/L18/L25 subcomplex. Contacts the 5S and 23S rRNAs.

Its function is as follows. This is one of the proteins that bind and probably mediate the attachment of the 5S RNA into the large ribosomal subunit, where it forms part of the central protuberance. This is Large ribosomal subunit protein uL18 from Latilactobacillus sakei subsp. sakei (strain 23K) (Lactobacillus sakei subsp. sakei).